The sequence spans 742 residues: uncharacterized protein (742 aa).

The tract at residues 1 to 102 is disordered; the sequence is MMLLKRSNDN…FTQTKPNNTD (102 aa). Residues 18-28 are compositionally biased toward low complexity; sequence NRQNRQNNRQN. Residues 48–57 are compositionally biased toward basic and acidic residues; that stretch reads RDSSRMDPVD. 2 stretches are compositionally biased toward polar residues: residues 60–69 and 77–99; these read TLISFTSGKP and HDTGTNKYSSSKLSETFTQTKPN.

This is an uncharacterized protein from Acanthamoeba polyphaga mimivirus (APMV).